A 178-amino-acid chain; its full sequence is RNA pyrophosphohydrolase (178 aa).

The 154-residue stretch at 18 to 171 folds into the Nudix hydrolase domain; sequence PYRPCVGLMV…KRKVYEQVVA (154 aa). Positions 59-80 match the Nudix box motif; the sequence is GGIDKGEDPAQAALRELYEETG.

Belongs to the Nudix hydrolase family. RppH subfamily. It depends on a divalent metal cation as a cofactor.

Accelerates the degradation of transcripts by removing pyrophosphate from the 5'-end of triphosphorylated RNA, leading to a more labile monophosphorylated state that can stimulate subsequent ribonuclease cleavage. The sequence is that of RNA pyrophosphohydrolase from Brucella canis (strain ATCC 23365 / NCTC 10854 / RM-666).